Reading from the N-terminus, the 235-residue chain is Aspartate/glutamate leucyltransferase (235 aa).

The protein belongs to the R-transferase family. Bpt subfamily.

It localises to the cytoplasm. It catalyses the reaction N-terminal L-glutamyl-[protein] + L-leucyl-tRNA(Leu) = N-terminal L-leucyl-L-glutamyl-[protein] + tRNA(Leu) + H(+). The catalysed reaction is N-terminal L-aspartyl-[protein] + L-leucyl-tRNA(Leu) = N-terminal L-leucyl-L-aspartyl-[protein] + tRNA(Leu) + H(+). In terms of biological role, functions in the N-end rule pathway of protein degradation where it conjugates Leu from its aminoacyl-tRNA to the N-termini of proteins containing an N-terminal aspartate or glutamate. The polypeptide is Aspartate/glutamate leucyltransferase (Pseudomonas syringae pv. tomato (strain ATCC BAA-871 / DC3000)).